A 72-amino-acid chain; its full sequence is DNA-directed RNA polymerase subunit omega (72 aa).

It belongs to the RNA polymerase subunit omega family. As to quaternary structure, the RNAP catalytic core consists of 2 alpha, 1 beta, 1 beta' and 1 omega subunit. When a sigma factor is associated with the core the holoenzyme is formed, which can initiate transcription.

The enzyme catalyses RNA(n) + a ribonucleoside 5'-triphosphate = RNA(n+1) + diphosphate. In terms of biological role, promotes RNA polymerase assembly. Latches the N- and C-terminal regions of the beta' subunit thereby facilitating its interaction with the beta and alpha subunits. The sequence is that of DNA-directed RNA polymerase subunit omega from Petrotoga mobilis (strain DSM 10674 / SJ95).